The following is a 259-amino-acid chain: Small ribosomal subunit protein eS4 (259 aa).

The region spanning Leu41–Met100 is the S4 RNA-binding domain.

Belongs to the eukaryotic ribosomal protein eS4 family.

In Caenorhabditis elegans, this protein is Small ribosomal subunit protein eS4 (rps-4).